A 208-amino-acid polypeptide reads, in one-letter code: Harpin secretion protein HrpW (208 aa).

Transmembrane regions (helical) follow at residues 2 to 22 (LALF…CTAF), 46 to 66 (ALYG…AHDI), 149 to 169 (IGFL…NLLL), and 176 to 196 (VSPM…VSGW).

Belongs to the FliP/MopC/SpaP family.

The protein resides in the cell membrane. Functionally, required for the secretion of harpin. This chain is Harpin secretion protein HrpW (hrpW), found in Pseudomonas syringae pv. syringae.